We begin with the raw amino-acid sequence, 222 residues long: 2-C-methyl-D-erythritol 4-phosphate cytidylyltransferase (222 aa).

This sequence belongs to the IspD/TarI cytidylyltransferase family. IspD subfamily.

The catalysed reaction is 2-C-methyl-D-erythritol 4-phosphate + CTP + H(+) = 4-CDP-2-C-methyl-D-erythritol + diphosphate. It participates in isoprenoid biosynthesis; isopentenyl diphosphate biosynthesis via DXP pathway; isopentenyl diphosphate from 1-deoxy-D-xylulose 5-phosphate: step 2/6. In terms of biological role, catalyzes the formation of 4-diphosphocytidyl-2-C-methyl-D-erythritol from CTP and 2-C-methyl-D-erythritol 4-phosphate (MEP). This chain is 2-C-methyl-D-erythritol 4-phosphate cytidylyltransferase, found in Thermotoga maritima (strain ATCC 43589 / DSM 3109 / JCM 10099 / NBRC 100826 / MSB8).